We begin with the raw amino-acid sequence, 197 residues long: Small ribosomal subunit protein uS4c (197 aa).

The 73-residue stretch at 85 to 157 (MRLDNILFRL…LQLFTGKELA (73 aa)) folds into the S4 RNA-binding domain.

It belongs to the universal ribosomal protein uS4 family. Part of the 30S ribosomal subunit. Contacts protein S5. The interaction surface between S4 and S5 is involved in control of translational fidelity.

It localises to the plastid. Functionally, one of the primary rRNA binding proteins, it binds directly to 16S rRNA where it nucleates assembly of the body of the 30S subunit. In terms of biological role, with S5 and S12 plays an important role in translational accuracy. This chain is Small ribosomal subunit protein uS4c (rps4), found in Cuscuta gronovii (Common dodder).